The following is a 217-amino-acid chain: MTAEHDTDTPEPRLNSTEIRILGCLIEKQATNPETYPLTLNALVLACNQKTSREPVMNLSQGQVGQSLRVLEGQGFTRLVMGSRADRWEHRVDKALELVPAQVILTGLLFLRGPQTVNELLTRSGRMHDFEDAEQVVHQLERLIARGLALLVPRQAGQREDRYTHALGDPADIEVIIAARGSPVERGAGSGVSVERIEELEARIALLEERLAKLEPL.

The protein belongs to the UPF0502 family.

This is UPF0502 protein PFLU_2135 from Pseudomonas fluorescens (strain SBW25).